The primary structure comprises 1035 residues: Glycine dehydrogenase (decarboxylating), mitochondrial (1035 aa).

A mitochondrion-targeting transit peptide spans 1–64 (MERARKLANR…KSFNTQQARS (64 aa)). Position 771 is an N6-(pyridoxal phosphate)lysine (Lys-771).

The protein belongs to the GcvP family. Homodimer. The glycine cleavage system is composed of four proteins: P, T, L and H. Pyridoxal 5'-phosphate serves as cofactor.

The protein localises to the mitochondrion. It carries out the reaction N(6)-[(R)-lipoyl]-L-lysyl-[glycine-cleavage complex H protein] + glycine + H(+) = N(6)-[(R)-S(8)-aminomethyldihydrolipoyl]-L-lysyl-[glycine-cleavage complex H protein] + CO2. In terms of biological role, the glycine cleavage system catalyzes the degradation of glycine. The P protein binds the alpha-amino group of glycine through its pyridoxal phosphate cofactor; CO(2) is released and the remaining methylamine moiety is then transferred to the lipoamide cofactor of the H protein. The polypeptide is Glycine dehydrogenase (decarboxylating), mitochondrial (GDCSP) (Solanum tuberosum (Potato)).